The chain runs to 303 residues: Haloalkane dehalogenase (303 aa).

The 145-residue stretch at 48-192 (PVLLLHGEPS…GTVTKLSQAV (145 aa)) folds into the AB hydrolase-1 domain. Residue D123 is the Nucleophile of the active site. The active-site Proton donor is the D250. The Proton acceptor role is filled by H280.

Belongs to the haloalkane dehalogenase family. Type 1 subfamily. In terms of assembly, monomer.

The enzyme catalyses 1-haloalkane + H2O = a halide anion + a primary alcohol + H(+). In terms of biological role, catalyzes hydrolytic cleavage of carbon-halogen bonds in halogenated aliphatic compounds, leading to the formation of the corresponding primary alcohols, halide ions and protons. This Psychrobacter cryohalolentis (strain ATCC BAA-1226 / DSM 17306 / VKM B-2378 / K5) protein is Haloalkane dehalogenase.